Here is a 364-residue protein sequence, read N- to C-terminus: Ribosomal RNA large subunit methyltransferase M (364 aa).

S-adenosyl-L-methionine contacts are provided by residues S187, 220-223 (CPGG), D239, D259, and D276. The active-site Proton acceptor is the K305.

It belongs to the class I-like SAM-binding methyltransferase superfamily. RNA methyltransferase RlmE family. RlmM subfamily. Monomer.

It localises to the cytoplasm. The catalysed reaction is cytidine(2498) in 23S rRNA + S-adenosyl-L-methionine = 2'-O-methylcytidine(2498) in 23S rRNA + S-adenosyl-L-homocysteine + H(+). Functionally, catalyzes the 2'-O-methylation at nucleotide C2498 in 23S rRNA. The polypeptide is Ribosomal RNA large subunit methyltransferase M (Aeromonas hydrophila subsp. hydrophila (strain ATCC 7966 / DSM 30187 / BCRC 13018 / CCUG 14551 / JCM 1027 / KCTC 2358 / NCIMB 9240 / NCTC 8049)).